A 141-amino-acid chain; its full sequence is Large ribosomal subunit protein uL11 (141 aa).

The protein belongs to the universal ribosomal protein uL11 family. As to quaternary structure, part of the ribosomal stalk of the 50S ribosomal subunit. Interacts with L10 and the large rRNA to form the base of the stalk. L10 forms an elongated spine to which L12 dimers bind in a sequential fashion forming a multimeric L10(L12)X complex. In terms of processing, one or more lysine residues are methylated.

Its function is as follows. Forms part of the ribosomal stalk which helps the ribosome interact with GTP-bound translation factors. The sequence is that of Large ribosomal subunit protein uL11 from Pelodictyon phaeoclathratiforme (strain DSM 5477 / BU-1).